The primary structure comprises 408 residues: Guanine nucleotide-binding protein alpha-14 subunit (408 aa).

GTP-binding positions include 38–45 (HSEELEAK), 78–85 (GGPSSGKS), 201–205 (NRISK), 216–222 (VHSRKAT), 241–245 (DVGGQ), 285–288 (FPNF), 325–328 (NKVD), and Ala-380. Positions 70-408 (SHIKILILGG…KANSKATGLS (339 aa)) constitute a G-alpha domain. Residues 73 to 86 (KILILGGPSSGKST) form a G1 motif region. Ser-85 provides a ligand contact to Mg(2+). Positions 214–222 (DIVHSRKAT) are G2 motif. Thr-222 lines the Mg(2+) pocket. Positions 237–246 (LLMVDVGGQR) are G3 motif. The G4 motif stretch occupies residues 321 to 328 (LLFFNKVD). The G5 motif stretch occupies residues 378–383 (TTATNT).

Belongs to the G-alpha family. As to quaternary structure, g proteins are composed of 3 units; alpha, beta and gamma. The alpha chain contains the guanine nucleotide binding site.

In terms of biological role, guanine nucleotide-binding proteins (G proteins) are involved as modulators or transducers in various transmembrane signaling systems. The sequence is that of Guanine nucleotide-binding protein alpha-14 subunit (gpa-14) from Caenorhabditis briggsae.